Here is a 163-residue protein sequence, read N- to C-terminus: Cytochrome c-type biogenesis protein CcmE (163 aa).

The Cytoplasmic segment spans residues 1–8; it reads MNPRRKKR. A helical; Signal-anchor for type II membrane protein transmembrane segment spans residues 9-29; it reads LTLAVALIVGVAGAASLLLYA. Residues 30–163 lie on the Periplasmic side of the membrane; that stretch reads LNSNLNLFYT…QEGVEKTAQY (134 aa). Heme-binding residues include His131 and Tyr135.

It belongs to the CcmE/CycJ family.

It localises to the cell inner membrane. Functionally, heme chaperone required for the biogenesis of c-type cytochromes. Transiently binds heme delivered by CcmC and transfers the heme to apo-cytochromes in a process facilitated by CcmF and CcmH. The chain is Cytochrome c-type biogenesis protein CcmE from Shewanella denitrificans (strain OS217 / ATCC BAA-1090 / DSM 15013).